Consider the following 734-residue polypeptide: Vacuolar transporter chaperone complex subunit 2 (734 aa).

The 144-residue stretch at 1 to 144 folds into the SPX domain; the sequence is MRFSDSIEAG…PGYSLRPVFQ (144 aa). Residues 1–624 lie on the Cytoplasmic side of the membrane; that stretch reads MRFSDSIEAG…EAKVWLANER (624 aa). Positions 125-132 are important for inositol polyphosphate binding; it reads KIVKKHDK. S181 is subject to Phosphoserine. Position 529 is a phosphothreonine (T529). Y583 is subject to Phosphotyrosine. A helical membrane pass occupies residues 625–645; the sequence is TFLKWLHVVVLLGSLALALYN. The Vacuolar portion of the chain corresponds to 646–650; the sequence is SAGER. The helical transmembrane segment at 651 to 671 threads the bilayer; it reads LGQAFGVVYTLLAIFIGFYAW. The Cytoplasmic segment spans residues 672–693; that stretch reads KLHAKRSQMIKSRSPAPMTDYW. A helical membrane pass occupies residues 694-714; sequence GPLIVGTALAISLIVNMSFAL. Residues 715–734 are Vacuolar-facing; that stretch reads KDAVYQNLIEPDRLLVKLFT.

The protein belongs to the VTC2/3 family. As to quaternary structure, the VTC core complex is an integral membrane heterooligomer composed of at least the catalytic subunit vtc4 and the accessory subunits vtc1 and vtc2. vtc1 is a small membrane protein without hydrophilic domain. Vtc2 and vtc4 are related and have 2 hydrophilic domains that face the cytosol, an N-terminal SPX domain and the central core domain. The central core in vtc4 is the catalytic domain.

The protein localises to the vacuole membrane. Accessory subunit of the vacuolar transporter chaperone (VTC) complex. The VTC complex acts as a vacuolar polyphosphate polymerase that catalyzes the synthesis of inorganic polyphosphate (polyP) via transfer of phosphate from ATP to a growing polyP chain, releasing ADP. VTC exposes its catalytic domain vtc4 to the cytosol, where the growing polyP chain winds through a tunnel-shaped pocket, integrating cytoplasmic polymer synthesis with polyP membrane translocation. The VTC complex carries 9 vacuolar transmembrane domains, which are likely to constitute the translocation channel into the organelle lumen. PolyP synthesis is tightly coupled to its transport into the vacuole lumen, in order to avoid otherwise toxic intermediates in the cytosol, and it depends on the proton gradient across the membrane, formed by V-ATPase. The VTC complex also plays a role in vacuolar membrane fusion. The sequence is that of Vacuolar transporter chaperone complex subunit 2 (vtc2) from Schizosaccharomyces pombe (strain 972 / ATCC 24843) (Fission yeast).